Here is a 693-residue protein sequence, read N- to C-terminus: Homoaconitase, mitochondrial (693 aa).

Residues 1-17 (MFRVQRLRMFSTSRALY) constitute a mitochondrion transit peptide. [4Fe-4S] cluster-binding residues include cysteine 338, cysteine 405, and cysteine 408.

Belongs to the aconitase/IPM isomerase family. The cofactor is [4Fe-4S] cluster.

Its subcellular location is the mitochondrion. It carries out the reaction (2R,3S)-homoisocitrate = cis-homoaconitate + H2O. It participates in amino-acid biosynthesis; L-lysine biosynthesis via AAA pathway; L-alpha-aminoadipate from 2-oxoglutarate: step 3/5. Functionally, catalyzes the reversible hydration of cis-homoaconitate to (2R,3S)-homoisocitrate, a step in the alpha-aminoadipate pathway for lysine biosynthesis. The polypeptide is Homoaconitase, mitochondrial (LYS4) (Kluyveromyces lactis (strain ATCC 8585 / CBS 2359 / DSM 70799 / NBRC 1267 / NRRL Y-1140 / WM37) (Yeast)).